Reading from the N-terminus, the 645-residue chain is Bifurcating [FeFe] hydrogenase alpha subunit (645 aa).

The 2Fe-2S ferredoxin-type domain occupies 1–76 (MKIYVDGREV…GMKVKTNTPE (76 aa)). Positions 34, 45, 48, and 60 each coordinate [2Fe-2S] cluster. The 4Fe-4S His(Cys)3-ligated-type domain maps to 76-115 (EIYEMRRNILELILATHNRDCTTCDRNGSCKLQKYAEDFG). The [4Fe-4S] cluster site is built by histidine 92, cysteine 96, cysteine 99, cysteine 105, cysteine 143, cysteine 146, cysteine 149, cysteine 153, cysteine 186, cysteine 189, cysteine 192, cysteine 196, cysteine 295, cysteine 350, cysteine 482, and cysteine 486. 2 4Fe-4S ferredoxin-type domains span residues 133–164 (SAPV…VIEF) and 178–206 (DTPL…IRND). Cysteine 486 contributes to the Fe(2+) binding site. The [2Fe-2S] cluster site is built by cysteine 575, cysteine 580, cysteine 612, and cysteine 616.

In terms of assembly, heterotrimer composed of HydA (alpha subunit), HydB (beta subunit) and HydC (gamma subunit). Near neutral and acidic pH conditions favor oligomerization of the heterotrimeric holoenzyme. [2Fe-2S] cluster is required as a cofactor. The cofactor is [4Fe-4S] cluster. It depends on Fe(2+) as a cofactor.

It localises to the cytoplasm. It carries out the reaction 2 H2 + 2 oxidized [2Fe-2S]-[ferredoxin] + NAD(+) = 2 reduced [2Fe-2S]-[ferredoxin] + NADH + 3 H(+). Its function is as follows. Catalyzes the oxidation of the physiological electron carriers NADH and reduced ferredoxin, coupled to the production of H(2). Acts as a bifurcating [FeFe] hydrogenase, which uses the exergonic oxidation of reduced ferredoxin to drive the unfavorable oxidation of NADH to produce H(2). The alpha subunit contains the catalytic H-cluster. The polypeptide is Bifurcating [FeFe] hydrogenase alpha subunit (Thermotoga maritima (strain ATCC 43589 / DSM 3109 / JCM 10099 / NBRC 100826 / MSB8)).